Reading from the N-terminus, the 135-residue chain is uncharacterized protein (135 aa).

Transmembrane regions (helical) follow at residues 12–32, 68–88, and 98–118; these read IPIL…YNGI, SMIG…AKFC, and GILY…FYLF.

It localises to the cell membrane. This is an uncharacterized protein from Methanocaldococcus jannaschii (strain ATCC 43067 / DSM 2661 / JAL-1 / JCM 10045 / NBRC 100440) (Methanococcus jannaschii).